The following is a 120-amino-acid chain: Ribosome-binding factor A (120 aa).

This sequence belongs to the RbfA family. In terms of assembly, monomer. Binds 30S ribosomal subunits, but not 50S ribosomal subunits or 70S ribosomes.

The protein resides in the cytoplasm. Its function is as follows. One of several proteins that assist in the late maturation steps of the functional core of the 30S ribosomal subunit. Associates with free 30S ribosomal subunits (but not with 30S subunits that are part of 70S ribosomes or polysomes). Required for efficient processing of 16S rRNA. May interact with the 5'-terminal helix region of 16S rRNA. The chain is Ribosome-binding factor A from Rickettsia africae (strain ESF-5).